A 227-amino-acid chain; its full sequence is Small heat shock protein hspG3 (227 aa).

The sHSP domain occupies 31 to 227; that stretch reads NKRVDIIPSM…SSNTIKININ (197 aa). A disordered region spans residues 119–164; the sequence is QQQQLENSNKENDEPSIEEFEEDVKSKSELNKTTLNTTENKDEDKT.

The protein belongs to the small heat shock protein (HSP20) family.

The sequence is that of Small heat shock protein hspG3 (hspG3) from Dictyostelium discoideum (Social amoeba).